Here is a 618-residue protein sequence, read N- to C-terminus: MTTQAPPTSLLPLSPEQLARLQAAVGEFSPTQMAWLSGYFWGMVNQQPGAVASPAVAAPPPVTVTLISASQTGNARRLAEQLRDDLLAAQLSVNLVNAGDYKFKQIAQERLLVVVASTQGEGEPAEEAVALHKFLFSKKAPKLSETAFAVFGLGDTSYEHFCQAGKDFDSKLAELGAQRLLDRVDADVEYQVQAQQWRQQVVATLQAKVPAQSTAPTQFIAPTQFIAPTQSTTPAAAAITSGGTTTVSPYSKTAPLTAQLSVQQKVTGRNSEKDVRHIEIDLGDSGLRYQPGDALGVWFDNDPALVEELLALLWLKGDEPVSIDGQNMPLAQALLSHLELTQNTTLIVDKYAALSRDETLIALLADKPALQLYAKNTPFVDMVRQAPSDLNADQLVGLLRPLTPRLYSIASSQAETENEVHITVGVVRYDIDGRARSGGASGYLADRLEVDGDIRVFIEHNDNFRLPANPETPVIMIGPGTGIAPFRAFMQQREVDGASGKNWLFFGNPHFTEDFLYQVEWQRYVKEGVLTRIDLAWSRDQAHKIYVQDKLREQGAELWNWIQQGAHIYVCGDANRMAKDVEQVLLDVVALHGAMDAEQADEYLSELRQARRYQRDVY.

The Flavodoxin-like domain occupies 64 to 202 (VTLISASQTG…QAQQWRQQVV (139 aa)). FMN is bound by residues 70-75 (SQTGNA), 117-120 (STQG), and 153-162 (LGDTSYEHFC). Residues 253 to 467 (TAPLTAQLSV…IEHNDNFRLP (215 aa)) form the FAD-binding FR-type domain. Residues T341, K375, 405–408 (RLYS), 423–425 (TVG), Y429, and 438–441 (GGAS) contribute to the FAD site. NADP(+) is bound by residues 538–539 (SR), 544–548 (KIYVQ), and D580. Residue Y618 coordinates FAD.

It belongs to the NADPH-dependent sulphite reductase flavoprotein subunit CysJ family. This sequence in the N-terminal section; belongs to the flavodoxin family. The protein in the C-terminal section; belongs to the flavoprotein pyridine nucleotide cytochrome reductase family. In terms of assembly, alpha(8)-beta(8). The alpha component is a flavoprotein, the beta component is a hemoprotein. Requires FAD as cofactor. The cofactor is FMN.

It carries out the reaction hydrogen sulfide + 3 NADP(+) + 3 H2O = sulfite + 3 NADPH + 4 H(+). Its pathway is sulfur metabolism; hydrogen sulfide biosynthesis; hydrogen sulfide from sulfite (NADPH route): step 1/1. Component of the sulfite reductase complex that catalyzes the 6-electron reduction of sulfite to sulfide. This is one of several activities required for the biosynthesis of L-cysteine from sulfate. The flavoprotein component catalyzes the electron flow from NADPH -&gt; FAD -&gt; FMN to the hemoprotein component. This is Sulfite reductase [NADPH] flavoprotein alpha-component from Yersinia pseudotuberculosis serotype I (strain IP32953).